The primary structure comprises 735 residues: Serine/threonine-protein kinase BRSK2 (735 aa).

The 252-residue stretch at tyrosine 20–tyrosine 271 folds into the Protein kinase domain. Residues leucine 26 to valine 34 and lysine 49 each bind ATP. The Proton acceptor role is filled by aspartate 142. Threonine 175 carries the phosphothreonine; by LKB1 modification. Threonine 261 carries the phosphothreonine; by PKA modification. Residue serine 295 is modified to Phosphoserine. Residues aspartate 298–aspartate 340 enclose the UBA domain. Basic and acidic residues predominate over residues proline 346–aspartate 367. Disordered regions lie at residues proline 346 to tryptophan 476, phenylalanine 493 to serine 514, and lysine 682 to proline 735. A phosphoserine mark is found at serine 368, serine 383, serine 394, serine 413, alanine 417, serine 424, and serine 428. Residues serine 411–proline 429 are compositionally biased toward low complexity. Residues threonine 432–lysine 446 are compositionally biased toward pro residues. Serine 456 bears the Phosphoserine mark. Phosphothreonine is present on residues threonine 460, threonine 464, and threonine 510. Phosphoserine is present on residues serine 513 and serine 514.

It belongs to the protein kinase superfamily. CAMK Ser/Thr protein kinase family. SNF1 subfamily. In terms of assembly, interacts with FZR1, a regulatory subunit of the APC ubiquitin ligase complex. Interacts with COPS5. Interacts with PAK1. Requires Mg(2+) as cofactor. Post-translationally, may be phosphorylated at Thr-261 by PKA. Phosphorylated at Thr-175 by STK11/LKB1 in complex with STE20-related adapter-alpha (STRADA) pseudo kinase and CAB39. Not phosphorylated at Thr-175 by CaMKK2. In contrast, it is phosphorylated and activated by CaMKK1. May be inactivated via dephosphorylation of Thr-175 by PP2C. Polyubiquitinated by the APC complex in conjunction with FZR1, leading to its proteasomal degradation. Targeted for proteasomal degradation by interaction with COPS5. BRSK2 levels change during the cell cycle. BRSK2 levels are low at the G1/S boundary and gradually increase as cells progress into G2 phase. BRSK2 levels decrease rapidly at the end of mitosis.

The protein resides in the cytoplasm. The protein localises to the cytoskeleton. Its subcellular location is the microtubule organizing center. It is found in the centrosome. It localises to the perinuclear region. The protein resides in the endoplasmic reticulum. The enzyme catalyses L-seryl-[protein] + ATP = O-phospho-L-seryl-[protein] + ADP + H(+). It carries out the reaction L-threonyl-[protein] + ATP = O-phospho-L-threonyl-[protein] + ADP + H(+). It catalyses the reaction L-seryl-[tau protein] + ATP = O-phospho-L-seryl-[tau protein] + ADP + H(+). The catalysed reaction is L-threonyl-[tau protein] + ATP = O-phospho-L-threonyl-[tau protein] + ADP + H(+). Activated by phosphorylation on Thr-175 by STK11/LKB1. In terms of biological role, serine/threonine-protein kinase that plays a key role in polarization of neurons and axonogenesis, cell cycle progress and insulin secretion. Phosphorylates CDK16, CDC25C, MAPT/TAU, PAK1 and WEE1. Following phosphorylation and activation by STK11/LKB1, acts as a key regulator of polarization of cortical neurons, probably by mediating phosphorylation of microtubule-associated proteins such as MAPT/TAU at 'Thr-523' and 'Ser-573'. Also regulates neuron polarization by mediating phosphorylation of WEE1 at 'Ser-642' in post-mitotic neurons, leading to down-regulate WEE1 activity in polarized neurons. Plays a role in the regulation of the mitotic cell cycle progress and the onset of mitosis. Plays a role in the regulation of insulin secretion in response to elevated glucose levels, probably via phosphorylation of CDK16 and PAK1. While BRSK2 phosphorylated at Thr-175 can inhibit insulin secretion, BRSK2 phosphorylated at Thr-261 can promote insulin secretion. Regulates reorganization of the actin cytoskeleton. May play a role in the apoptotic response triggered by endoplasmic reticulum (ER) stress. This chain is Serine/threonine-protein kinase BRSK2 (Brsk2), found in Rattus norvegicus (Rat).